The chain runs to 150 residues: Small ribosomal subunit protein uS11y (150 aa).

A disordered region spans residues 129–150 (EDVTPVPTDSTRRKGGRRGRRL). A compositionally biased stretch (basic residues) spans 141–150 (RKGGRRGRRL).

The protein belongs to the universal ribosomal protein uS11 family.

This Zea mays (Maize) protein is Small ribosomal subunit protein uS11y.